The sequence spans 320 residues: Zinc finger Ran-binding domain-containing protein 2 (320 aa).

Serine 9 carries the phosphoserine modification. The segment at 9-40 adopts a RanBP2-type 1 zinc-finger fold; the sequence is SDGDWICPDKKCGNVNFARRTSCNRCGREKTT. An N6-acetyllysine mark is found at lysine 18, lysine 54, and lysine 92. The RanBP2-type 2 zinc-finger motif lies at 65-94; it reads SANDWQCKTCSNVNWARRSECNMCNTPKYA. The segment at 117 to 320 is disordered; that stretch reads REESDGEYDE…QVIGENTKQP (204 aa). Serine 120, serine 153, serine 181, serine 188, and serine 193 each carry phosphoserine. Positions 150 to 163 are enriched in acidic residues; sequence DKESEGEEEDEDED. Positions 151 to 320 are required for nuclear targeting; that stretch reads KESEGEEEDE…QVIGENTKQP (170 aa). Positions 196 to 210 are enriched in basic residues; sequence KKSNRRSRSKSRSSH. Composition is skewed to low complexity over residues 211-224 and 232-242; these read SRSS…SSSR and RSSSSSQSRSR. Positions 251-273 are enriched in basic residues; the sequence is SRGSKSRSSSRSHRGSSSPRKRS.

The protein belongs to the ZRANB2 family. Interacts with the C-terminal half of SNRP70/U1-70K, the Arg/Ser-rich domain of AKAP17A as well as with U2AF1 and CLK1. In terms of processing, phosphorylated on Ser-310 upon DNA damage, probably by ATM or ATR.

Its subcellular location is the nucleus. In terms of biological role, splice factor required for alternative splicing of TRA2B/SFRS10 transcripts. Binds to ssRNA containing the consensus sequence 5'-AGGUAA-3'. May interfere with constitutive 5'-splice site selection. This is Zinc finger Ran-binding domain-containing protein 2 from Pongo abelii (Sumatran orangutan).